A 77-amino-acid chain; its full sequence is Putative antitoxin MazE7 (77 aa).

The disordered stretch occupies residues 49-77; that stretch reads REASHAETTTQAVRDEDREWEGTVGDGLG.

Forms a complex with cognate toxin MazF7.

Functionally, antitoxin component of a type II toxin-antitoxin (TA) system. The protein is Putative antitoxin MazE7 (mazE7) of Mycobacterium tuberculosis (strain CDC 1551 / Oshkosh).